The following is a 341-amino-acid chain: Glycerol-3-phosphate dehydrogenase [NAD(P)+] (341 aa).

The NADPH site is built by S17, W18, R37, and K112. Positions 112 and 140 each coordinate sn-glycerol 3-phosphate. Residue A144 coordinates NADPH. 5 residues coordinate sn-glycerol 3-phosphate: K195, D248, S258, R259, and N260. K195 functions as the Proton acceptor in the catalytic mechanism. R259 serves as a coordination point for NADPH. The NADPH site is built by V283 and E285.

It belongs to the NAD-dependent glycerol-3-phosphate dehydrogenase family.

The protein resides in the cytoplasm. The catalysed reaction is sn-glycerol 3-phosphate + NAD(+) = dihydroxyacetone phosphate + NADH + H(+). It catalyses the reaction sn-glycerol 3-phosphate + NADP(+) = dihydroxyacetone phosphate + NADPH + H(+). It functions in the pathway membrane lipid metabolism; glycerophospholipid metabolism. Functionally, catalyzes the reduction of the glycolytic intermediate dihydroxyacetone phosphate (DHAP) to sn-glycerol 3-phosphate (G3P), the key precursor for phospholipid synthesis. This Mycobacterium avium (strain 104) protein is Glycerol-3-phosphate dehydrogenase [NAD(P)+].